Consider the following 715-residue polypeptide: Polyribonucleotide nucleotidyltransferase (715 aa).

Positions 500 and 506 each coordinate Mg(2+). A KH domain is found at 567-634 (PKVKMIRINP…AYIESLVREA (68 aa)). The 76-residue stretch at 637–712 (GELYEAKVTR…ERGRVDLSRK (76 aa)) folds into the S1 motif domain.

Belongs to the polyribonucleotide nucleotidyltransferase family. The cofactor is Mg(2+).

The protein localises to the cytoplasm. The catalysed reaction is RNA(n+1) + phosphate = RNA(n) + a ribonucleoside 5'-diphosphate. Its function is as follows. Involved in mRNA degradation. Catalyzes the phosphorolysis of single-stranded polyribonucleotides processively in the 3'- to 5'-direction. The protein is Polyribonucleotide nucleotidyltransferase of Acholeplasma laidlawii (strain PG-8A).